The chain runs to 511 residues: Inositol-3-phosphate synthase isozyme 1 (511 aa).

NAD(+) is bound by residues G71, G72, N73, N74, D144, I181, Q191, R194, T231, A232, N233, T234, G282, S283, D307, S310, N341, N342, D343, K356, A394, D395, D423, and S424.

The protein belongs to the myo-inositol 1-phosphate synthase family. Homotrimer or homotetramer. Interacts with ATXR5 and ATXR6. The cofactor is NAD(+). Expressed in siliques, leaves, roots, seed endosperm, but not in embryos. Highest expression in leaves, but restricted to vascular tissue in older leaves.

It is found in the cytoplasm. The protein resides in the cytosol. It localises to the nucleus. The enzyme catalyses D-glucose 6-phosphate = 1D-myo-inositol 3-phosphate. The protein operates within polyol metabolism; myo-inositol biosynthesis; myo-inositol from D-glucose 6-phosphate: step 1/2. In terms of biological role, key enzyme in myo-inositol biosynthesis pathway that catalyzes the conversion of glucose 6-phosphate to 1-myo-inositol 1-phosphate in a NAD-dependent manner. Catalyzes the majority of myo-inositol synthesis required for plant growth and development. Acts as a repressor of programmed cell death and protects plant cells against cell death under high light intensity or long days. Controls its own transcription by inhibiting ATXR6 activity. Reduces the deposition of inhibitory histone marks on its own promoter. The protein is Inositol-3-phosphate synthase isozyme 1 (IPS1) of Arabidopsis thaliana (Mouse-ear cress).